Reading from the N-terminus, the 296-residue chain is 4-hydroxy-tetrahydrodipicolinate synthase (296 aa).

T47 contacts pyruvate. The Proton donor/acceptor role is filled by Y135. K164 serves as the catalytic Schiff-base intermediate with substrate. I207 is a pyruvate binding site.

It belongs to the DapA family. As to quaternary structure, homotetramer; dimer of dimers.

It is found in the cytoplasm. The catalysed reaction is L-aspartate 4-semialdehyde + pyruvate = (2S,4S)-4-hydroxy-2,3,4,5-tetrahydrodipicolinate + H2O + H(+). The protein operates within amino-acid biosynthesis; L-lysine biosynthesis via DAP pathway; (S)-tetrahydrodipicolinate from L-aspartate: step 3/4. Catalyzes the condensation of (S)-aspartate-beta-semialdehyde [(S)-ASA] and pyruvate to 4-hydroxy-tetrahydrodipicolinate (HTPA). The protein is 4-hydroxy-tetrahydrodipicolinate synthase of Karelsulcia muelleri (strain GWSS) (Sulcia muelleri).